A 408-amino-acid polypeptide reads, in one-letter code: Acetate kinase (408 aa).

Residue N7 participates in Mg(2+) binding. ATP is bound at residue K14. R91 is a binding site for substrate. D148 functions as the Proton donor/acceptor in the catalytic mechanism. Residues 208-212 (HLGNG) and 283-285 (DLR) each bind ATP. E388 provides a ligand contact to Mg(2+).

Belongs to the acetokinase family. In terms of assembly, homodimer. It depends on Mg(2+) as a cofactor. The cofactor is Mn(2+).

It is found in the cytoplasm. It catalyses the reaction acetate + ATP = acetyl phosphate + ADP. It functions in the pathway metabolic intermediate biosynthesis; acetyl-CoA biosynthesis; acetyl-CoA from acetate: step 1/2. In terms of biological role, catalyzes the formation of acetyl phosphate from acetate and ATP. Can also catalyze the reverse reaction. In Borrelia hermsii (strain HS1 / DAH), this protein is Acetate kinase.